A 164-amino-acid chain; its full sequence is NADH-quinone oxidoreductase subunit I (164 aa).

4Fe-4S ferredoxin-type domains follow at residues 56–85 (RRYESGEERCIACKLCEAICPAQAITIEAE) and 95–124 (TRYDIDMTKCIYCGFCQEACPVDAIVEGPN). 8 residues coordinate [4Fe-4S] cluster: C65, C68, C71, C75, C104, C107, C110, and C114.

The protein belongs to the complex I 23 kDa subunit family. As to quaternary structure, NDH-1 is composed of 14 different subunits. Subunits NuoA, H, J, K, L, M, N constitute the membrane sector of the complex. It depends on [4Fe-4S] cluster as a cofactor.

It localises to the cell inner membrane. The catalysed reaction is a quinone + NADH + 5 H(+)(in) = a quinol + NAD(+) + 4 H(+)(out). In terms of biological role, NDH-1 shuttles electrons from NADH, via FMN and iron-sulfur (Fe-S) centers, to quinones in the respiratory chain. The immediate electron acceptor for the enzyme in this species is believed to be ubiquinone. Couples the redox reaction to proton translocation (for every two electrons transferred, four hydrogen ions are translocated across the cytoplasmic membrane), and thus conserves the redox energy in a proton gradient. This is NADH-quinone oxidoreductase subunit I from Anaplasma phagocytophilum (strain HZ).